The primary structure comprises 734 residues: Tripartite terminase subunit 3 (734 aa).

The Nuclear localization signal motif lies at 184–190 (ASKRARV). The Walker A motif signature appears at 259 to 266 (VPRRHGKT). The short motif at 353–358 (LLFVDE) is the Walker B motif element. E358 serves as the catalytic For ATPase activity. Catalysis depends on for nuclease activity residues D511, E583, and D707.

It belongs to the herpesviridae TRM3 protein family. As to quaternary structure, interacts with the terminase subunits TRM1 and TRM2. Interacts with portal protein.

The protein resides in the host nucleus. In terms of biological role, component of the molecular motor that translocates viral genomic DNA in empty capsid during DNA packaging. Forms a tripartite terminase complex together with TRM1 and TRM2 in the host cytoplasm. Once the complex reaches the host nucleus, it interacts with the capsid portal vertex. This portal forms a ring in which genomic DNA is translocated into the capsid. TRM3 carries an RNase H-like nuclease activity that plays an important role for the cleavage of concatemeric viral DNA into unit length genomes. This chain is Tripartite terminase subunit 3, found in Equus caballus (Horse).